The chain runs to 493 residues: Ketol-acid reductoisomerase (NADP(+)) (493 aa).

A KARI N-terminal Rossmann domain is found at 17–208 (LGKCRFMKRE…GGDRAGVLES (192 aa)). NADP(+) is bound by residues 45–48 (CGAQ), Arg-68, Arg-76, Ser-78, and 108–110 (DKQ). Residue His-132 is part of the active site. Gly-158 provides a ligand contact to NADP(+). KARI C-terminal knotted domains lie at 209–353 (SFIA…SEQE) and 354–486 (YYDK…MTDM). 4 residues coordinate Mg(2+): Asp-217, Glu-221, Glu-389, and Glu-393. Ser-414 provides a ligand contact to substrate.

Belongs to the ketol-acid reductoisomerase family. It depends on Mg(2+) as a cofactor.

It carries out the reaction (2R)-2,3-dihydroxy-3-methylbutanoate + NADP(+) = (2S)-2-acetolactate + NADPH + H(+). The catalysed reaction is (2R,3R)-2,3-dihydroxy-3-methylpentanoate + NADP(+) = (S)-2-ethyl-2-hydroxy-3-oxobutanoate + NADPH + H(+). It participates in amino-acid biosynthesis; L-isoleucine biosynthesis; L-isoleucine from 2-oxobutanoate: step 2/4. It functions in the pathway amino-acid biosynthesis; L-valine biosynthesis; L-valine from pyruvate: step 2/4. In terms of biological role, involved in the biosynthesis of branched-chain amino acids (BCAA). Catalyzes an alkyl-migration followed by a ketol-acid reduction of (S)-2-acetolactate (S2AL) to yield (R)-2,3-dihydroxy-isovalerate. In the isomerase reaction, S2AL is rearranged via a Mg-dependent methyl migration to produce 3-hydroxy-3-methyl-2-ketobutyrate (HMKB). In the reductase reaction, this 2-ketoacid undergoes a metal-dependent reduction by NADPH to yield (R)-2,3-dihydroxy-isovalerate. In Colwellia psychrerythraea (strain 34H / ATCC BAA-681) (Vibrio psychroerythus), this protein is Ketol-acid reductoisomerase (NADP(+)).